The following is a 200-amino-acid chain: Small ribosomal subunit protein eS8B (200 aa).

A disordered region spans residues 1 to 41 (MGITRDSRHKRSATGAKRAQYRKKRKFELGRQPSNTRIGPK). Phosphoserine occurs at positions 62 and 99. A disordered region spans residues 124–145 (KGKKATATPTPKSKHVQRKHSA). Residues 135–145 (KSKHVQRKHSA) are compositionally biased toward basic residues. Phosphoserine occurs at positions 150, 154, and 171.

This sequence belongs to the eukaryotic ribosomal protein eS8 family. Component of the small ribosomal subunit (SSU). Mature yeast ribosomes consist of a small (40S) and a large (60S) subunit. The 40S small subunit contains 1 molecule of ribosomal RNA (18S rRNA) and at least 33 different proteins. The large 60S subunit contains 3 rRNA molecules (25S, 5.8S and 5S rRNA) and at least 46 different proteins.

The protein localises to the cytoplasm. Component of the ribosome, a large ribonucleoprotein complex responsible for the synthesis of proteins in the cell. The small ribosomal subunit (SSU) binds messenger RNAs (mRNAs) and translates the encoded message by selecting cognate aminoacyl-transfer RNA (tRNA) molecules. The large subunit (LSU) contains the ribosomal catalytic site termed the peptidyl transferase center (PTC), which catalyzes the formation of peptide bonds, thereby polymerizing the amino acids delivered by tRNAs into a polypeptide chain. The nascent polypeptides leave the ribosome through a tunnel in the LSU and interact with protein factors that function in enzymatic processing, targeting, and the membrane insertion of nascent chains at the exit of the ribosomal tunnel. This Schizosaccharomyces pombe (strain 972 / ATCC 24843) (Fission yeast) protein is Small ribosomal subunit protein eS8B (rps802).